The chain runs to 130 residues: Large ribosomal subunit protein eL32 (130 aa).

Belongs to the eukaryotic ribosomal protein eL32 family.

This Pyrococcus horikoshii (strain ATCC 700860 / DSM 12428 / JCM 9974 / NBRC 100139 / OT-3) protein is Large ribosomal subunit protein eL32 (rpl32e).